Reading from the N-terminus, the 323-residue chain is Tyrosine recombinase XerD (323 aa).

The Core-binding (CB) domain occupies 21–106; that stretch reads AEDDQAIQRF…TLRGFYALCL (86 aa). The Tyr recombinase domain maps to 127–317; it reads SLPKALTESQ…ARQHLQTLHA (191 aa). Active-site residues include Arg167, Lys191, His269, Arg272, and His295. The active-site O-(3'-phospho-DNA)-tyrosine intermediate is the Tyr304.

It belongs to the 'phage' integrase family. XerD subfamily. In terms of assembly, forms a cyclic heterotetrameric complex composed of two molecules of XerC and two molecules of XerD.

The protein localises to the cytoplasm. Its function is as follows. Site-specific tyrosine recombinase, which acts by catalyzing the cutting and rejoining of the recombining DNA molecules. The XerC-XerD complex is essential to convert dimers of the bacterial chromosome into monomers to permit their segregation at cell division. It also contributes to the segregational stability of plasmids. The protein is Tyrosine recombinase XerD of Xanthomonas campestris pv. campestris (strain ATCC 33913 / DSM 3586 / NCPPB 528 / LMG 568 / P 25).